The primary structure comprises 273 residues: Putative phosphoenolpyruvate synthase regulatory protein (273 aa).

Glycine 153–threonine 160 provides a ligand contact to ADP.

Belongs to the pyruvate, phosphate/water dikinase regulatory protein family. PSRP subfamily.

It carries out the reaction [pyruvate, water dikinase] + ADP = [pyruvate, water dikinase]-phosphate + AMP + H(+). The enzyme catalyses [pyruvate, water dikinase]-phosphate + phosphate + H(+) = [pyruvate, water dikinase] + diphosphate. Functionally, bifunctional serine/threonine kinase and phosphorylase involved in the regulation of the phosphoenolpyruvate synthase (PEPS) by catalyzing its phosphorylation/dephosphorylation. The sequence is that of Putative phosphoenolpyruvate synthase regulatory protein from Variovorax paradoxus (strain S110).